A 604-amino-acid chain; its full sequence is Solute carrier family 23 member 1 (604 aa).

The disordered stretch occupies residues 1–29 (MKAQEDPGSSKQHECPDSAGTSTRDQQAP). Residues 1 to 59 (MKAQEDPGSSKQHECPDSAGTSTRDQQAPLPAEPKFDMLYKIEDVPPWYLCILLGFQHY) lie on the Cytoplasmic side of the membrane. Residues 60–80 (LTCFSGTIAVPFLLAEALCVG) form a helical membrane-spanning segment. The Extracellular segment spans residues 81 to 88 (RDQHMISQ). Residues 89–109 (LIGTIFTCVGITTLIQTTVGI) form a helical membrane-spanning segment. R110 is a topological domain (cytoplasmic). The helical transmembrane segment at 111-131 (LPLFQASAFAFLVPAKAILAL) threads the bilayer. Over 132 to 166 (ERWKCPPEEEIYGNWSMPLNTSHIWHPRIREVQGA) the chain is Extracellular. N145 and N151 each carry an N-linked (GlcNAc...) asparagine glycan. Residues 167–187 (IMVSSVVEVVIGLLGLPGALL) form a helical membrane-spanning segment. At 188-214 (SYIGPLTVTPTVSLIGLSVFQAAGDRA) the chain is on the cytoplasmic side. Residues 215-232 (GSHWGISACSILLIVLFS) traverse the membrane as a helical segment. The Extracellular segment spans residues 233-236 (QYLR). An intramembrane region (helical) is located at residues 237 to 250 (NLTFLLPVYRWGKG). Topologically, residues 251-257 (LTLFRIQ) are extracellular. Residues 258–278 (IFKMFPIVLAIMTVWLLCYVL) traverse the membrane as a helical segment. At 279–319 (TLTDVLPADPTVYGFQARTDARGDIMAISPWIRIPYPCQWG) the chain is on the cytoplasmic side. Residues 320-340 (LPTVTVAAVLGMFSATLAGII) form a helical membrane-spanning segment. The Extracellular segment spans residues 341 to 365 (ESIGDYYACARLAGAPPPPVHAINR). The helical transmembrane segment at 366–386 (GIFTEGVCCIIAGLLGTGNGS) threads the bilayer. Over 387–409 (TSSSPNIGVLGITKVGSRRVVQY) the chain is Cytoplasmic. Residues 410 to 430 (GAGIMLILGAIGKFTALFASL) form a helical membrane-spanning segment. At 431-433 (PDP) the chain is on the extracellular side. A helical transmembrane segment spans residues 434–454 (ILGGMFCTLFGMITAVGLSNL). Over 455–464 (QFVDMNSSRN) the chain is Cytoplasmic. A helical membrane pass occupies residues 465 to 485 (LFVLGFSMFFGLTLPNYLDSN). The Extracellular segment spans residues 486–497 (PGAINTGVPEVD). Residues 498–518 (QILTVLLTTEMFVGGCLAFIL) form a helical membrane-spanning segment. At 519–604 (DNTVPGSPEE…TETGSVCTKV (86 aa)) the chain is on the cytoplasmic side. A Phosphothreonine modification is found at T597. S599 is modified (phosphoserine). The residue at position 602 (T602) is a Phosphothreonine.

Belongs to the nucleobase:cation symporter-2 (NCS2) (TC 2.A.40) family. Phosphorylated. As to expression, highly expressed in the straight segment of proximal tubules in the kidney, in intestine and liver. Detected in epithelial cells of the bronchiole and epididymis.

It localises to the cell membrane. It carries out the reaction L-ascorbate(out) + 2 Na(+)(out) = L-ascorbate(in) + 2 Na(+)(in). The catalysed reaction is urate(out) + 2 Na(+)(out) = urate(in) + 2 Na(+)(in). Its function is as follows. Sodium/ascorbate cotransporter. Mediates electrogenic uptake of vitamin C, with a stoichiometry of 2 Na(+) for each ascorbate. Has retained some ancestral activity toward nucleobases such as urate, an oxidized purine. Low-affinity high-capacity sodium:urate cotransporter, may regulate serum urate levels by serving as a renal urate re-absorber. In Rattus norvegicus (Rat), this protein is Solute carrier family 23 member 1 (Slc23a1).